The following is a 220-amino-acid chain: Probable septum site-determining protein MinC (220 aa).

This sequence belongs to the MinC family. In terms of assembly, interacts with MinD and FtsZ.

Its function is as follows. Cell division inhibitor that blocks the formation of polar Z ring septums. Rapidly oscillates between the poles of the cell to destabilize FtsZ filaments that have formed before they mature into polar Z rings. Prevents FtsZ polymerization. The protein is Probable septum site-determining protein MinC of Vibrio parahaemolyticus serotype O3:K6 (strain RIMD 2210633).